Consider the following 127-residue polypeptide: Classical arabinogalactan protein 10 (127 aa).

The N-terminal stretch at 1 to 21 (MASKSVVVLLFLALIASSAIA) is a signal peptide. Glutamine 22 is subject to Pyrrolidone carboxylic acid. The disordered stretch occupies residues 22–107 (QAPGPAPTRS…TGSTPVDNNN (86 aa)). 5 positions are modified to 4-hydroxyproline: proline 24, proline 26, proline 28, proline 32, and proline 36. O-linked (Ara...) hydroxyproline glycans are attached at residues proline 24, proline 26, proline 28, proline 32, and proline 36. Composition is skewed to pro residues over residues 25–39 (GPAP…PAQP), 48–58 (SITPTPTPTPS), and 66–86 (VSPP…PPTS). Residues 98 to 107 (TGSTPVDNNN) show a composition bias toward polar residues. Asparagine 107 is lipidated: GPI-anchor amidated asparagine. The propeptide at 108–127 (AATLAAGSLAGFVFVASLLL) is removed in mature form.

The protein belongs to the classical AGP family. In terms of processing, O-glycosylated on hydroxyprolines; noncontiguous hydroxylproline residues are glycosylated with arabinogalactan. Predominantly expressed in flowers and at a lower level in roots and siliques.

It is found in the cell membrane. In terms of biological role, proteoglycan that seems to be implicated in diverse developmental roles such as differentiation, cell-cell recognition, embryogenesis and programmed cell death. This Arabidopsis thaliana (Mouse-ear cress) protein is Classical arabinogalactan protein 10 (AGP10).